A 106-amino-acid chain; its full sequence is Ribonuclease P protein component 4 (106 aa).

Positions 62, 65, 88, and 91 each coordinate Zn(2+).

This sequence belongs to the eukaryotic/archaeal RNase P protein component 4 family. In terms of assembly, consists of a catalytic RNA component and at least 4-5 protein subunits. It depends on Zn(2+) as a cofactor.

It is found in the cytoplasm. The catalysed reaction is Endonucleolytic cleavage of RNA, removing 5'-extranucleotides from tRNA precursor.. Part of ribonuclease P, a protein complex that generates mature tRNA molecules by cleaving their 5'-ends. The sequence is that of Ribonuclease P protein component 4 from Methanocorpusculum labreanum (strain ATCC 43576 / DSM 4855 / Z).